Reading from the N-terminus, the 150-residue chain is MTFLKYLLILCTIFLMVTNSLSEEIDKEFNIKPEGNLDTVELVLENYKCIFSFAATGGTNENWKIFLTTENGVATCFIGRPKPISYLFFKQFSAQLINTKTGKSNIIPEISDNSGIMPLGDQYILTSDNKVVQSNNFAGNLAFLVLNSDK.

The N-terminal stretch at 1-22 is a signal peptide; the sequence is MTFLKYLLILCTIFLMVTNSLS.

Belongs to the MYDGF family.

The protein localises to the secreted. The protein is Myeloid-derived growth factor homolog of Dictyostelium discoideum (Social amoeba).